The following is a 350-amino-acid chain: MTLRKIIHIDMDAFYASVEMRDDPSLVLKPIAVGGDPDKRGVIATANYLARKFGVRSAMPSWKAKQLCPDLIILFPDFDKYKRESKAIHEIFHLFTDLIEPLSLDEAFLDVTDVDALRGSATWIAQEIRQLIWKERGLTASAGVAPNKFLAKVASDWHKPNGQFVLTPKEVDAFMVHLPVEKIFGIGHVMAKKLHSLGLMNCGDLQTLDITTLQKLFGSRAWNLYELCRGIDHRFVISDRIRKSLSVESTFLEDLNNLELCYQEIPNLIERLMIRYEKISNQYYKKKPFIKIKFADFTTTTVENTFFKAFDLETYQTLIRIGWERKKAPVRLLGLGMSLSLEEEIQLTLF.

In terms of domain architecture, UmuC spans 6 to 187; sequence IIHIDMDAFY…LPVEKIFGIG (182 aa). Mg(2+) contacts are provided by aspartate 10 and aspartate 105. The active site involves glutamate 106.

It belongs to the DNA polymerase type-Y family. In terms of assembly, monomer. The cofactor is Mg(2+).

Its subcellular location is the cytoplasm. The enzyme catalyses DNA(n) + a 2'-deoxyribonucleoside 5'-triphosphate = DNA(n+1) + diphosphate. Poorly processive, error-prone DNA polymerase involved in untargeted mutagenesis. Copies undamaged DNA at stalled replication forks, which arise in vivo from mismatched or misaligned primer ends. These misaligned primers can be extended by PolIV. Exhibits no 3'-5' exonuclease (proofreading) activity. May be involved in translesional synthesis, in conjunction with the beta clamp from PolIII. The polypeptide is DNA polymerase IV (Protochlamydia amoebophila (strain UWE25)).